A 690-amino-acid chain; its full sequence is Copper-exporting P-type ATPase B (690 aa).

Over M1–V64 the chain is Cytoplasmic. The segment at Q23–D46 is disordered. Over residues H28–D46 the composition is skewed to basic and acidic residues. A helical membrane pass occupies residues S65 to F85. Topologically, residues R86–G91 are extracellular. The helical transmembrane segment at S92–L112 threads the bilayer. Over K113–M127 the chain is Cytoplasmic. The chain crosses the membrane as a helical span at residues T128–L148. Residues K149–K151 lie on the Extracellular side of the membrane. The chain crosses the membrane as a helical span at residues F152–M172. Topologically, residues R173–R303 are cytoplasmic. The helical transmembrane segment at A304–L324 threads the bilayer. The Extracellular portion of the chain corresponds to A325–R336. Residues A337–V357 form a helical membrane-spanning segment. At A358–N640 the chain is on the cytoplasmic side. The 4-aspartylphosphate intermediate role is filled by D389. Residues K390–T391, T537–G538, and K565 contribute to the phosphate site. Mg(2+) is bound by residues D583 and D587. The helical transmembrane segment at L641–S661 threads the bilayer. Residues A662–G663 lie on the Extracellular side of the membrane. A helical transmembrane segment spans residues I664–I684. Topologically, residues N685 to R690 are cytoplasmic.

Belongs to the cation transport ATPase (P-type) (TC 3.A.3) family. Type IB subfamily.

It is found in the cell membrane. The enzyme catalyses Cu(2+)(in) + ATP + H2O = Cu(2+)(out) + ADP + phosphate + H(+). Its activity is regulated as follows. Activated by Cu(2+) and to a lesser extent by Ag(+) and Cu(+). In terms of biological role, involved in copper export. This Archaeoglobus fulgidus (strain ATCC 49558 / DSM 4304 / JCM 9628 / NBRC 100126 / VC-16) protein is Copper-exporting P-type ATPase B (copB).